We begin with the raw amino-acid sequence, 61 residues long: Ferredoxin-3 (61 aa).

4Fe-4S ferredoxin-type domains follow at residues 2-31 (YKIT…LQDG) and 32-61 (KAVA…VEEN). 2 residues coordinate [3Fe-4S] cluster: C11 and C17. [4Fe-4S] cluster contacts are provided by C21, C41, C44, and C47. C51 serves as a coordination point for [3Fe-4S] cluster.

The cofactor is [3Fe-4S] cluster. [4Fe-4S] cluster is required as a cofactor.

In terms of biological role, ferredoxins are iron-sulfur proteins that transfer electrons in a wide variety of metabolic reactions. The polypeptide is Ferredoxin-3 (Desulfocurvibacter africanus (Desulfovibrio africanus)).